We begin with the raw amino-acid sequence, 134 residues long: Cytochrome b (134 aa).

The next 3 helical transmembrane spans lie at 33–53 (FGSL…FLAM), 77–98 (WLIR…FLHV), and 113–133 (WNMG…GYVL). 2 residues coordinate heme b: His83 and His97.

This sequence belongs to the cytochrome b family. As to quaternary structure, the cytochrome bc1 complex contains 11 subunits: 3 respiratory subunits (MT-CYB, CYC1 and UQCRFS1), 2 core proteins (UQCRC1 and UQCRC2) and 6 low-molecular weight proteins (UQCRH/QCR6, UQCRB/QCR7, UQCRQ/QCR8, UQCR10/QCR9, UQCR11/QCR10 and a cleavage product of UQCRFS1). This cytochrome bc1 complex then forms a dimer. It depends on heme b as a cofactor.

It localises to the mitochondrion inner membrane. Component of the ubiquinol-cytochrome c reductase complex (complex III or cytochrome b-c1 complex) that is part of the mitochondrial respiratory chain. The b-c1 complex mediates electron transfer from ubiquinol to cytochrome c. Contributes to the generation of a proton gradient across the mitochondrial membrane that is then used for ATP synthesis. The sequence is that of Cytochrome b (MT-CYB) from Microtus subterraneus (European pine vole).